The following is a 72-amino-acid chain: Small ribosomal subunit protein bS18c (72 aa).

This sequence belongs to the bacterial ribosomal protein bS18 family. In terms of assembly, part of the 30S ribosomal subunit.

Its subcellular location is the plastid. The protein localises to the chloroplast. This Phaeodactylum tricornutum (strain CCAP 1055/1) protein is Small ribosomal subunit protein bS18c.